The chain runs to 507 residues: Cobyric acid synthase (507 aa).

Positions 259 to 456 constitute a GATase cobBQ-type domain; the sequence is EIQIAVIKLP…LHGIFDNGTW (198 aa). C340 functions as the Nucleophile in the catalytic mechanism. Residue H448 is part of the active site.

It belongs to the CobB/CobQ family. CobQ subfamily.

Its pathway is cofactor biosynthesis; adenosylcobalamin biosynthesis. Functionally, catalyzes amidations at positions B, D, E, and G on adenosylcobyrinic A,C-diamide. NH(2) groups are provided by glutamine, and one molecule of ATP is hydrogenolyzed for each amidation. The protein is Cobyric acid synthase of Prochlorococcus marinus (strain SARG / CCMP1375 / SS120).